The following is a 501-amino-acid chain: Actin-binding protein WASF3 (501 aa).

Residues Asn57–Gln93 are a coiled coil. Tyr151 is subject to Phosphotyrosine; by ABL1. Residues Lys162 to Asn206 are a coiled coil. The segment at Glu170 to Leu443 is disordered. The span at Gln182–Val192 shows a compositional bias: basic and acidic residues. The segment covering Arg219–Asp237 has biased composition (polar residues). Tyr248 carries the post-translational modification Phosphotyrosine; by ABL1. Positions His256–Tyr267 are enriched in polar residues. Over residues Gln302–Ala312 the composition is skewed to pro residues. Position 337 is a phosphotyrosine; by ABL1 (Tyr337). 2 stretches are compositionally biased toward pro residues: residues Ser341 to Ile352 and Ala394 to Pro410. Residues Ser411 to Pro422 show a composition bias toward low complexity. A WH2 domain is found at Ala439 to Val456. Phosphotyrosine; by ABL1 is present on Tyr485.

The protein belongs to the SCAR/WAVE family. Binds actin and the Arp2/3 complex. Phosphorylation by ABL1 promotes lamellipodia formation and cell migration.

It localises to the cytoplasm. The protein resides in the cytoskeleton. Functionally, downstream effector molecules involved in the transmission of signals from tyrosine kinase receptors and small GTPases to the actin cytoskeleton. Plays a role in the regulation of cell morphology and cytoskeletal organization. Required in the control of cell shape. The sequence is that of Actin-binding protein WASF3 (Wasf3) from Mus musculus (Mouse).